The chain runs to 481 residues: MADMPSGESCTSPLELFNSIAAQGELVRSLKAGNAPKDEIESAVKMLLSLKMNYKTAMGEEYKAGCPPGNSTAGSNGDPDATKASEDFVDPWTVRTSSAKGIDYDKLIVQFGSSKIDKELINRIERATGQRPHRFLRRGIFFSHRDMNQILDAYENKKPFYLYTGRGPSSEAMHLGHLVPFIFTKWLQDVFDVPLVIQMSDDEKYLWKDLTLEQAYSYTVENAKDIIACGFDVNKTFIFSDLEYMGQSPGFYKNVVKIQKHVTFNQVKGIFGFTDSDCIGKISFPAVQAAPSFSNSFPKIFRDRTDIQCLIPCAIDQDPYFRMTRDVAPRIGHPKPALLHSTFFPALQGAQTKMSASDPNSSIFLTDTAKQIKSKVNKHAFSGGRDTVEEHRQFGGNCEVDVSFMYLTFFLEDDDSLEQIRKDYTSGAMLTGELKKTLIDVLQPLIAEHQARRKAVTEETVKEFMAPRQLSFHFQCFCFDT.

The 57-residue stretch at 12 to 68 (SPLELFNSIAAQGELVRSLKAGNAPKDEIESAVKMLLSLKMNYKTAMGEEYKAGCPP) folds into the WHEP-TRS domain. Positions 65-85 (GCPPGNSTAGSNGDPDATKAS) are disordered. Lys158 carries the N6-succinyllysine modification. The short motif at 168–177 (PSSEAMHLGH) is the 'HIGH' region element. Residues 353-357 (KMSAS) carry the 'KMSKS' region motif. Ser355 bears the Phosphoserine mark.

The protein belongs to the class-I aminoacyl-tRNA synthetase family. As to quaternary structure, homodimer. Interacts with oxidized form of GAPDH. In terms of processing, proteolytic cleavage generates 2 forms; T1-TrpRS and T2-TrpRS.

The protein localises to the cytoplasm. The catalysed reaction is tRNA(Trp) + L-tryptophan + ATP = L-tryptophyl-tRNA(Trp) + AMP + diphosphate + H(+). Its function is as follows. Catalyzes the attachment of tryptophan to tRNA(Trp) in a two-step reaction: tryptophan is first activated by ATP to form Trp-AMP and then transferred to the acceptor end of the tRNA(Trp). Could also possess an angiostatic activity. In Rattus norvegicus (Rat), this protein is Tryptophan--tRNA ligase, cytoplasmic.